A 108-amino-acid chain; its full sequence is uncharacterized protein (108 aa).

Positions 1–16 (MKKLILIAIMASGLVA) are cleaved as a signal peptide. The N-palmitoyl cysteine moiety is linked to residue C17. C17 carries the S-diacylglycerol cysteine lipid modification.

It localises to the cell membrane. This is an uncharacterized protein from Escherichia coli (strain K12).